A 795-amino-acid chain; its full sequence is Phenylalanine--tRNA ligase beta subunit (795 aa).

One can recognise a tRNA-binding domain in the interval 39 to 148 (AGEFNGVVVG…ADAPVGKDFR (110 aa)). The 76-residue stretch at 401 to 476 (PKLNKVQLRR…RIYGYNSIPN (76 aa)) folds into the B5 domain. 4 residues coordinate Mg(2+): Asp454, Asp460, Glu463, and Glu464. Residues 701–794 (SKFPANKRDL…LKDRFNAYLR (94 aa)) form the FDX-ACB domain.

Belongs to the phenylalanyl-tRNA synthetase beta subunit family. Type 1 subfamily. As to quaternary structure, tetramer of two alpha and two beta subunits. Mg(2+) serves as cofactor.

It is found in the cytoplasm. It carries out the reaction tRNA(Phe) + L-phenylalanine + ATP = L-phenylalanyl-tRNA(Phe) + AMP + diphosphate + H(+). The chain is Phenylalanine--tRNA ligase beta subunit from Mannheimia succiniciproducens (strain KCTC 0769BP / MBEL55E).